Reading from the N-terminus, the 2134-residue chain is Genome polyprotein (2134 aa).

The Cytoplasmic portion of the chain corresponds to 1–1377; the sequence is MSKLFSTVGR…WLFEKIKTSK (1377 aa). Residues 781 to 882 form the LRAT domain; that stretch reads IVICSGEKAK…GDYGTKEGEK (102 aa). Active-site residues include His791 and His802. Cys863 acts as the Acyl-thioester intermediate in catalysis. An SF3 helicase domain is found at 1127–1289; the sequence is LNKLGRLDKP…EEFSTHAMLD (163 aa). 1153 to 1160 lines the ATP pocket; the sequence is GNRGGGKS. The stretch at 1378–1392 is an intramembrane region; sequence WYILGCVGAALSVSV. The Cytoplasmic segment spans residues 1393 to 2134; that stretch reads LGVFAYHMIK…VKDRVIDDSF (742 aa). Tyr1415 bears the O-(5'-phospho-RNA)-tyrosine mark. A Peptidase C3 domain is found at 1431-1643; sequence DAQSVVDISN…ITKEMIEEML (213 aa). Active-site for protease 3C activity residues include His1477, Asp1515, and Cys1603. In terms of domain architecture, RdRp catalytic spans 1880-2001; it reads DLVVGLDFSN…CIKKESLDQK (122 aa).

Belongs to the picornaviridae polyprotein family. Specific enzymatic cleavages by the viral protease in vivo yield a variety of precursors and mature proteins. During virion maturation, non-infectious particles are rendered infectious following cleavage of VP0. This maturation cleavage is followed by a conformational change of the particle. In terms of processing, VPg is uridylylated by the polymerase and is covalently linked to the 5'-end of genomic RNA. This uridylylated form acts as a nucleotide-peptide primer for the polymerase.

It localises to the virion. It is found in the host cytoplasm. Its subcellular location is the host cytoplasmic vesicle membrane. The enzyme catalyses RNA(n) + a ribonucleoside 5'-triphosphate = RNA(n+1) + diphosphate. The catalysed reaction is a ribonucleoside 5'-triphosphate + H2O = a ribonucleoside 5'-diphosphate + phosphate + H(+). It carries out the reaction Selective cleavage of Gln-|-Gly bond in the poliovirus polyprotein. In other picornavirus reactions Glu may be substituted for Gln, and Ser or Thr for Gly.. Capsid proteins VP1, VP2, and VP3 form a closed capsid enclosing the viral positive strand RNA genome. All these proteins contain a beta-sheet structure called beta-barrel jelly roll. Together they form an icosahedral capsid (T=3) composed of 60 copies of each VP1, VP2, and VP3, with a diameter of approximately 300 Angstroms. VP1 is situated at the 12 fivefold axes, whereas VP2 and VP3 are located at the quasi-sixfold axes. Functionally, VP0 precursor is a component of immature procapsids. The N-terminal domain of VP0, protein VP4, is needed for the assembly of 12 pentamers into the icosahedral structure. Unlike other picornaviruses, AEV VP4 may not be myristoylated. Its function is as follows. Protein 2B and 2BC precursor affect membrane integrity and cause an increase in membrane permeability. In terms of biological role, associates with and induces structural rearrangements of intracellular membranes. It displays RNA-binding, nucleotide binding and NTPase activities. Protein 3A, via its hydrophobic domain, serves as membrane anchor. Functionally, protein 3B is covalently linked to the 5'-end of both the positive-strand and negative-strand genomic RNAs. It acts as a genome-linked replication primer. Its function is as follows. Cysteine protease that generates mature viral proteins from the precursor polyprotein. In addition to its proteolytic activity, it binds to viral RNA, and thus influences viral genome replication. RNA and substrate bind cooperatively to the protease. In terms of biological role, RNA-directed RNA polymerase 3D-POL replicates genomic and antigenomic RNA by recognizing replications specific signals. This is Genome polyprotein from Avian encephalomyelitis virus (strain L2Z) (AEV).